Reading from the N-terminus, the 416-residue chain is Probable glucan 1,3-beta-glucosidase A (416 aa).

The signal sequence occupies residues 1–21 (MLYNLSKAVLALSVLAASADA). Catalysis depends on E209, which acts as the Proton donor. 2 cysteine pairs are disulfide-bonded: C290–C415 and C316–C341. The active-site Nucleophile is E308.

It belongs to the glycosyl hydrolase 5 (cellulase A) family. In terms of assembly, monomer. Mn(2+) is required as a cofactor.

It is found in the secreted. It catalyses the reaction Successive hydrolysis of beta-D-glucose units from the non-reducing ends of (1-&gt;3)-beta-D-glucans, releasing alpha-glucose.. Beta-glucanases participate in the metabolism of beta-glucan, the main structural component of the cell wall. It could also function biosynthetically as a transglycosylase. The protein is Probable glucan 1,3-beta-glucosidase A (exgA) of Aspergillus terreus (strain NIH 2624 / FGSC A1156).